A 182-amino-acid polypeptide reads, in one-letter code: 3-hydroxyanthranilate 3,4-dioxygenase (182 aa).

Residue R46 coordinates O2. Residues H50, E56, and H96 each contribute to the Fe cation site. Position 56 (E56) interacts with substrate. Substrate contacts are provided by R100 and E111. Residues C126, C129, C163, and C166 each contribute to the Fe cation site.

The protein belongs to the 3-HAO family. As to quaternary structure, homodimer. It depends on Fe(2+) as a cofactor.

The enzyme catalyses 3-hydroxyanthranilate + O2 = (2Z,4Z)-2-amino-3-carboxymuconate 6-semialdehyde. It functions in the pathway cofactor biosynthesis; NAD(+) biosynthesis; quinolinate from L-kynurenine: step 3/3. Functionally, catalyzes the oxidative ring opening of 3-hydroxyanthranilate to 2-amino-3-carboxymuconate semialdehyde, which spontaneously cyclizes to quinolinate. This is 3-hydroxyanthranilate 3,4-dioxygenase from Brucella anthropi (strain ATCC 49188 / DSM 6882 / CCUG 24695 / JCM 21032 / LMG 3331 / NBRC 15819 / NCTC 12168 / Alc 37) (Ochrobactrum anthropi).